A 59-amino-acid chain; its full sequence is MDKKLLEILVCPLCKGKLLFKKQELICKFDRLAFPVRDDIPVMLEQEARLIPLEEKDKL.

It belongs to the UPF0434 family.

In Legionella pneumophila subsp. pneumophila (strain Philadelphia 1 / ATCC 33152 / DSM 7513), this protein is UPF0434 protein lpg1920.